A 314-amino-acid chain; its full sequence is Inosine-uridine preferring nucleoside hydrolase (314 aa).

Asp-10 contacts Ca(2+). Asp-14 contributes to the substrate binding site. Positions 15 and 126 each coordinate Ca(2+). Substrate is bound by residues Asn-160, Glu-166, and Asn-168. His-240 serves as the catalytic Proton donor. Asp-241 lines the Ca(2+) pocket.

It belongs to the IUNH family. As to quaternary structure, homotetramer. It depends on Ca(2+) as a cofactor.

It carries out the reaction inosine + H2O = hypoxanthine + D-ribose. It catalyses the reaction uridine + H2O = D-ribose + uracil. Its pathway is purine metabolism; purine nucleoside salvage. With respect to regulation, is potently inhibited by immucillin A and immucillin ACAP, which are transition state inhibitors. In terms of biological role, catalyzes the hydrolysis of the N-glycosidic bond of all of the commonly occurring purine and pyrimidine nucleosides into ribose and the associated base, but has a preference for inosine and uridine as substrates. Likely functions in purine salvage from the host, a fundamental pathway since protozoan parasites such as L.major are incapable of de novo purine biosynthesis. This is Inosine-uridine preferring nucleoside hydrolase (NSNH) from Leishmania major.